A 287-amino-acid chain; its full sequence is Bifunctional protein FolD (287 aa).

NADP(+)-binding positions include 166–168 and Ile232; that span reads GAS.

The protein belongs to the tetrahydrofolate dehydrogenase/cyclohydrolase family. Homodimer.

It catalyses the reaction (6R)-5,10-methylene-5,6,7,8-tetrahydrofolate + NADP(+) = (6R)-5,10-methenyltetrahydrofolate + NADPH. The enzyme catalyses (6R)-5,10-methenyltetrahydrofolate + H2O = (6R)-10-formyltetrahydrofolate + H(+). It participates in one-carbon metabolism; tetrahydrofolate interconversion. In terms of biological role, catalyzes the oxidation of 5,10-methylenetetrahydrofolate to 5,10-methenyltetrahydrofolate and then the hydrolysis of 5,10-methenyltetrahydrofolate to 10-formyltetrahydrofolate. This chain is Bifunctional protein FolD, found in Pectobacterium carotovorum subsp. carotovorum (strain PC1).